A 116-amino-acid polypeptide reads, in one-letter code: MRVKTGTVRRKRHKKILKMAKGFYSGRRKHFRKAKEQVERSLVYAFRDRKQKKRDFRKLWIIRINAACRLNDISYSRFINGLKKANIDLDRKILADLAMNEPEVFAQIVEKAKAAL.

It belongs to the bacterial ribosomal protein bL20 family.

Its function is as follows. Binds directly to 23S ribosomal RNA and is necessary for the in vitro assembly process of the 50S ribosomal subunit. It is not involved in the protein synthesizing functions of that subunit. This Nautilia profundicola (strain ATCC BAA-1463 / DSM 18972 / AmH) protein is Large ribosomal subunit protein bL20.